A 626-amino-acid chain; its full sequence is MASPNGGVTTYDYHDSDSAAPVNAQTIEELHSLQRKAATTTKDGASPLQSISASLASLAREYGPNLVKGDPEATKGAPPVPIKHQQPSAAAATIAASDSSLKFTHVLYNLSPAELYEQAFGQKKSSFITSTGALATLSGAKTGRSPRDKRVVKDETTSQELWWGKGSPNIEMDERQFVINRERALDYLNSLDKVYVNDQFLNWDSENRIKVRIITSRAYHALFMHNMCIRPTEEELESFGTPDFTIYNAGEFPANRYANYMTSSTSINISLARREMVILGTQYAGEMKKGLFGVMHYLMPKRGILSLHSGCNMGKEGDVALFFGLSGTGKTTLSTDHNRLLIGDDEHCWSDNGVSNIEGGCYAKCIDLSQEKEPDIWNAIKFGTVLENVVFNERTREVDYADKSITENTRAAYPIEFIPNAKIPCVGPHPKNVILLACDAYGVLPPVSKLNLAQTMYHFISGYTAIVAGTEDGVKEPTATFSACFGAAFIMYHPTKYAAMLAEKMQKYGATGWLVNTGWSGGRYGVGNRIKLPYTRKIIDAIHSGELLNASYKKTEVFGLEIPTAINGVPSEILGPVNTWTDKAAYKETLLKLAGLFKNNFEVFASYKIGNNNSLTEQILAAAPNF.

2 disordered regions span residues 1–23 and 64–86; these read MASP…APVN and PNLV…KHQQ. 324-331 provides a ligand contact to ATP; it reads GLSGTGKT.

It belongs to the phosphoenolpyruvate carboxykinase (ATP) family. In terms of assembly, homohexamer.

The protein localises to the cytoplasm. It catalyses the reaction oxaloacetate + ATP = phosphoenolpyruvate + ADP + CO2. Its pathway is carbohydrate biosynthesis; gluconeogenesis. This chain is Phosphoenolpyruvate carboxykinase (ATP) 2 (PCK2), found in Urochloa panicoides (Panic liverseed grass).